The chain runs to 93 residues: Alpha-defensin 7 (93 aa).

A signal peptide spans 1 to 19; sequence MKTLILLSALVLLAFQVQA. Positions 20–58 are excised as a propeptide; that stretch reads DPIQNTDEETKTEEQPGEDDQAVSVSFGDPEGSSLQEES. The segment at 22-56 is disordered; the sequence is IQNTDEETKTEEQPGEDDQAVSVSFGDPEGSSLQE. 3 cysteine pairs are disulfide-bonded: cysteine 64/cysteine 92, cysteine 66/cysteine 81, and cysteine 71/cysteine 91.

Belongs to the alpha-defensin family. As to expression, paneth cells of the small bowel.

It localises to the secreted. Its function is as follows. Probably contributes to the antimicrobial barrier function of the small bowel mucosa. The sequence is that of Alpha-defensin 7 (Defa7) from Mus musculus (Mouse).